A 480-amino-acid polypeptide reads, in one-letter code: Glutamyl-tRNA(Gln) amidotransferase subunit A (480 aa).

Catalysis depends on charge relay system residues Lys74 and Ser149. Ser173 functions as the Acyl-ester intermediate in the catalytic mechanism.

It belongs to the amidase family. GatA subfamily. Heterotrimer of A, B and C subunits.

The catalysed reaction is L-glutamyl-tRNA(Gln) + L-glutamine + ATP + H2O = L-glutaminyl-tRNA(Gln) + L-glutamate + ADP + phosphate + H(+). Its function is as follows. Allows the formation of correctly charged Gln-tRNA(Gln) through the transamidation of misacylated Glu-tRNA(Gln) in organisms which lack glutaminyl-tRNA synthetase. The reaction takes place in the presence of glutamine and ATP through an activated gamma-phospho-Glu-tRNA(Gln). This is Glutamyl-tRNA(Gln) amidotransferase subunit A from Vesicomyosocius okutanii subsp. Calyptogena okutanii (strain HA).